Here is a 503-residue protein sequence, read N- to C-terminus: Alpha-1,3/1,6-mannosyltransferase ALG2 (503 aa).

The next 2 helical transmembrane spans lie at 64–84 (VYGD…FATI) and 112–132 (TCIP…CHFP). N-linked (GlcNAc...) asparagine glycosylation is found at Asn170, Asn303, Asn371, and Asn400. A helical transmembrane segment spans residues 443–463 (WEIFGISFSNFILHMAFIKIL).

Belongs to the glycosyltransferase group 1 family. Glycosyltransferase 4 subfamily. Interacts with ALG1.

It is found in the endoplasmic reticulum membrane. The catalysed reaction is a beta-D-Man-(1-&gt;4)-beta-D-GlcNAc-(1-&gt;4)-alpha-D-GlcNAc-diphospho-di-trans,poly-cis-dolichol + GDP-alpha-D-mannose = an alpha-D-Man-(1-&gt;3)-beta-D-Man-(1-&gt;4)-beta-D-GlcNAc-(1-&gt;4)-alpha-D-GlcNAc-diphospho-di-trans,poly-cis-dolichol + GDP + H(+). It carries out the reaction an alpha-D-Man-(1-&gt;3)-beta-D-Man-(1-&gt;4)-beta-D-GlcNAc-(1-&gt;4)-alpha-D-GlcNAc-diphospho-di-trans,poly-cis-dolichol + GDP-alpha-D-mannose = an alpha-D-Man-(1-&gt;3)-[alpha-D-Man-(1-&gt;6)]-beta-D-Man-(1-&gt;4)-beta-D-GlcNAc-(1-&gt;4)-alpha-D-GlcNAc-diphospho-di-trans,poly-cis-dolichol + GDP + H(+). It functions in the pathway protein modification; protein glycosylation. Functionally, mannosylates Man(2)GlcNAc(2)-dolichol diphosphate and Man(1)GlcNAc(2)-dolichol diphosphate to form Man(3)GlcNAc(2)-dolichol diphosphate. The polypeptide is Alpha-1,3/1,6-mannosyltransferase ALG2 (ALG2) (Saccharomyces cerevisiae (strain ATCC 204508 / S288c) (Baker's yeast)).